A 143-amino-acid chain; its full sequence is Hemoglobin subunit alpha (143 aa).

S2 carries the post-translational modification N-acetylserine. The Globin domain maps to 2 to 143 (SLSDKDKAAV…VALALAEKYR (142 aa)). H60 serves as a coordination point for O2. H89 serves as a coordination point for heme b.

The protein belongs to the globin family. As to quaternary structure, heterotetramer of two alpha chains and two beta chains. As to expression, red blood cells.

Functionally, involved in oxygen transport from the lung to the various peripheral tissues. The sequence is that of Hemoglobin subunit alpha (hba) from Artedidraco orianae (Barbeled plunderfish).